We begin with the raw amino-acid sequence, 292 residues long: RNA-binding P34 protein (292 aa).

A helical transmembrane segment spans residues 29–46 (CAIYTVACRILFLSVGFM). Positions 219–292 (EGFKSPQVEY…NFKAKNKNNE (74 aa)) are RNA-binding.

Its subcellular location is the host endoplasmic reticulum membrane. Acts as a ssRNA-binding protein that may be involved in targeting RNA2 to replication sites or facilitating RNA2 replication. This chain is RNA-binding P34 protein, found in Lettuce infectious yellows virus (isolate United States/92) (LIYV).